Reading from the N-terminus, the 479-residue chain is MASAGLYRRVLPSPPAIDFASPEGKKIFVEALGQGTMEGFFKLVSYYQTQSEPAYCGLATLTVVLNALSIDPGRKWKGPWRWFDDSMLDCCEPLEKIKVQGITFGKVACLARCNGAHVEAFRSNESTVSDFRDRVISCCSSEDRHLIVSYHRSGLKQTGEGHFSPIGGYHAERDMVLILDVTRYKYPPHWVPLTLLWDAMNTIDRATGLQRGYMIISKLKRAPSILYTVSCRHEGWSSVAKFLTENVPLLLKSEDLKDIQEVLSVVFKSPPSELREFITWIAEVRRQEDGNLTLSEEEKGRLAIKADILEQIRTTTLFKHVTSWLDSQRSRCRTIAKLQDRDMLPELAAGVCCQGACLLTGCCLPGGKCCSQIDVKHLNVDHKNIVTLVSGTVASGSSSEQGVDVLVPLCQMGPEGHCIGMHPSTADVLTVLLLALPLHTWSGIKEEKLCAEVTSLLTTENLPPLLQEEVRFSLETVLF.

Residues 1–221 (MASAGLYRRV…GYMIISKLKR (221 aa)) form the Peptidase C83 domain. Catalysis depends on residues Cys-56, His-162, and Asp-180.

It belongs to the phytochelatin synthase family. Expressed in roots, nodules and leaves.

The enzyme catalyses [Glu(-Cys)](n)-Gly + glutathione + H(+) = [Glu(-Cys)](n+1)-Gly + glycine. With respect to regulation, requires cadmium for activity. Involved in the synthesis of phytochelatins (PC) and homophytochelatins (hPC), the heavy-metal-binding peptides of plants. The sequence is that of Glutathione gamma-glutamylcysteinyltransferase 3 (PCS3) from Lotus japonicus (Lotus corniculatus var. japonicus).